The following is a 511-amino-acid chain: Exodeoxyribonuclease 7 large subunit (511 aa).

Belongs to the XseA family. In terms of assembly, heterooligomer composed of large and small subunits.

The protein localises to the cytoplasm. The catalysed reaction is Exonucleolytic cleavage in either 5'- to 3'- or 3'- to 5'-direction to yield nucleoside 5'-phosphates.. Its function is as follows. Bidirectionally degrades single-stranded DNA into large acid-insoluble oligonucleotides, which are then degraded further into small acid-soluble oligonucleotides. This is Exodeoxyribonuclease 7 large subunit from Brucella suis biovar 1 (strain 1330).